The following is a 433-amino-acid chain: D-amino acid dehydrogenase (433 aa).

3-17 (VLVLGSGVIGTTSAY) contacts FAD.

It belongs to the DadA oxidoreductase family. FAD serves as cofactor.

The catalysed reaction is a D-alpha-amino acid + A + H2O = a 2-oxocarboxylate + AH2 + NH4(+). It participates in amino-acid degradation; D-alanine degradation; NH(3) and pyruvate from D-alanine: step 1/1. Functionally, oxidative deamination of D-amino acids. This chain is D-amino acid dehydrogenase, found in Pseudomonas syringae pv. syringae (strain B728a).